We begin with the raw amino-acid sequence, 156 residues long: Interleukin-36 receptor antagonist protein (156 aa).

Cys9 and Cys155 are oxidised to a cystine.

This sequence belongs to the IL-1 family. In terms of assembly, interacts with cargo receptor TMED10; the interaction mediates the translocation from the cytoplasm into the ERGIC (endoplasmic reticulum-Golgi intermediate compartment) and thereby secretion. Post-translationally, removal of N-terminal methionine is necessary for full antagonistic activity. Highly abundant in embryonic tissue and tissues containing epithelial cells.

It is found in the cytoplasm. The protein resides in the secreted. Inhibits the activity of interleukin-36 (IL36A,IL36B and IL36G) by binding to receptor IL1RL2/IL-36R and preventing its association with the coreceptor IL1RAP for signaling. Part of the IL-36 signaling system that is thought to be present in epithelial barriers and to take part in local inflammatory response; similar to the IL-1 system with which it shares the coreceptor. Proposed to play a role in skin inflammation. May be involved in the innate immune response to fungal pathogens. May activate an anti-inflammatory signaling pathway by recruiting SIGIRR. The polypeptide is Interleukin-36 receptor antagonist protein (Mus musculus (Mouse)).